We begin with the raw amino-acid sequence, 398 residues long: Phosphoglycerate kinase (398 aa).

Residues 21 to 23 (DFN), Arg-36, 59 to 62 (HLGR), Arg-119, and Arg-157 contribute to the substrate site. ATP-binding positions include Lys-208, Gly-296, Glu-327, and 354-357 (GGDS).

The protein belongs to the phosphoglycerate kinase family. In terms of assembly, monomer.

It localises to the cytoplasm. The enzyme catalyses (2R)-3-phosphoglycerate + ATP = (2R)-3-phospho-glyceroyl phosphate + ADP. It functions in the pathway carbohydrate degradation; glycolysis; pyruvate from D-glyceraldehyde 3-phosphate: step 2/5. The sequence is that of Phosphoglycerate kinase from Streptococcus pneumoniae serotype 2 (strain D39 / NCTC 7466).